Reading from the N-terminus, the 440-residue chain is Xylose isomerase (440 aa).

Active-site residues include His-100 and Asp-103. Glu-231, Glu-267, His-270, Asp-295, Asp-306, Asp-308, and Asp-338 together coordinate Mg(2+).

The protein belongs to the xylose isomerase family. Homotetramer. Mg(2+) serves as cofactor.

The protein localises to the cytoplasm. It catalyses the reaction alpha-D-xylose = alpha-D-xylulofuranose. The chain is Xylose isomerase from Paraburkholderia xenovorans (strain LB400).